A 176-amino-acid polypeptide reads, in one-letter code: Oleosin Ara h 14.0102 (176 aa).

An N-acetylalanine; alternate modification is found at alanine 2. A run of 2 helical transmembrane segments spans residues 61-81 (GTLLLLSGLSLLGTIIGLAIA) and 87-107 (FFSPVIVPAVVTIGLAVIGIL). Residues 156–176 (KTKDAGQEIQTKAQDVKRSSS) are disordered.

The protein belongs to the oleosin family. Homodimer. Forms oligomers. As to expression, expressed in seeds (at protein level). Not expressed in leaves.

The protein resides in the lipid droplet. Its subcellular location is the membrane. In terms of biological role, may have a structural role to stabilize the lipid body during desiccation of the seed by preventing coalescence of the oil. Probably interacts with both lipid and phospholipid moieties of lipid bodies. May also provide recognition signals for specific lipase anchorage in lipolysis during seedling growth. This Arachis hypogaea (Peanut) protein is Oleosin Ara h 14.0102.